The sequence spans 897 residues: Patched domain-containing protein 1 (897 aa).

Residues 25–45 (PVFFLTVPAVLTIIFGSTVLS) traverse the membrane as a helical segment. N-linked (GlcNAc...) asparagine glycans are attached at residues Asn132, Asn167, and Asn179. The next 2 membrane-spanning stretches (helical) occupy residues 271–291 (GVLAKSEVLVSLVLVLLAATI) and 306–326 (GLLGVLTICIANVTAAGIFFI). An SSD domain is found at 273–433 (LAKSEVLVSL…FSFYGSCLVF (161 aa)). N-linked (GlcNAc...) asparagine glycosylation is present at Asn332. A run of 4 helical transmembrane segments spans residues 335-355 (LLGIPFFAMGHGTKGVFELLA), 377-397 (VMVCYTMTSSLYIITFGMGAS), 414-434 (VAVLVNYFYVFSFYGSCLVFA), and 506-526 (PFVVILYLIYASFSFMGCLQI). 2 N-linked (GlcNAc...) asparagine glycosylation sites follow: Asn572 and Asn603. 3 consecutive transmembrane segments (helical) span residues 701-721 (PILTSGFSVLTILILTFFLVI), 727-747 (FWLILTVTSVELGVLGLMTLW), and 754-774 (ISILCLIYTLNFAMDHCAPHL). N-linked (GlcNAc...) asparagine glycosylation is present at Asn803. The next 2 membrane-spanning stretches (helical) occupy residues 806-826 (CFVIGIMPLLFVPSNLTYTLF) and 831-851 (LTAGCTVLHCFVILPVFLTFF). A compositionally biased stretch (basic residues) spans 856–866 (KRHKKKKRAKR). Residues 856-881 (KRHKKKKRAKRKEREREREREREREE) are disordered. A compositionally biased stretch (basic and acidic residues) spans 867–881 (KEREREREREREREE).

This sequence belongs to the patched family.

Its subcellular location is the cell membrane. It localises to the cell projection. It is found in the dendritic spine. Its function is as follows. Can bind cholesterol in vitro. In Danio rerio (Zebrafish), this protein is Patched domain-containing protein 1 (ptchd1).